Consider the following 320-residue polypeptide: Tyrosine recombinase XerC (320 aa).

The Core-binding (CB) domain occupies 14–104 (ADVREAVASW…SLRSFARHLE (91 aa)). In terms of domain architecture, Tyr recombinase spans 125–311 (RLPRPLPVAA…DSARLMSAFE (187 aa)). Residues arginine 170, lysine 195, histidine 263, arginine 266, and histidine 289 contribute to the active site. Catalysis depends on tyrosine 298, which acts as the O-(3'-phospho-DNA)-tyrosine intermediate.

The protein belongs to the 'phage' integrase family. XerC subfamily. In terms of assembly, forms a cyclic heterotetrameric complex composed of two molecules of XerC and two molecules of XerD.

Its subcellular location is the cytoplasm. In terms of biological role, site-specific tyrosine recombinase, which acts by catalyzing the cutting and rejoining of the recombining DNA molecules. The XerC-XerD complex is essential to convert dimers of the bacterial chromosome into monomers to permit their segregation at cell division. It also contributes to the segregational stability of plasmids. This chain is Tyrosine recombinase XerC, found in Methylobacterium sp. (strain 4-46).